The chain runs to 592 residues: Arginine--tRNA ligase (592 aa).

The 'HIGH' region signature appears at 134-144; that stretch reads ANPTGPLHVGH.

Belongs to the class-I aminoacyl-tRNA synthetase family. In terms of assembly, monomer.

The protein resides in the cytoplasm. The catalysed reaction is tRNA(Arg) + L-arginine + ATP = L-arginyl-tRNA(Arg) + AMP + diphosphate. The chain is Arginine--tRNA ligase from Coxiella burnetii (strain RSA 493 / Nine Mile phase I).